We begin with the raw amino-acid sequence, 355 residues long: Elongation factor Ts (355 aa).

The tract at residues 82 to 85 (TDFV) is involved in Mg(2+) ion dislocation from EF-Tu.

This sequence belongs to the EF-Ts family.

Its subcellular location is the cytoplasm. Functionally, associates with the EF-Tu.GDP complex and induces the exchange of GDP to GTP. It remains bound to the aminoacyl-tRNA.EF-Tu.GTP complex up to the GTP hydrolysis stage on the ribosome. The sequence is that of Elongation factor Ts from Helicobacter pylori (strain HPAG1).